Here is a 72-residue protein sequence, read N- to C-terminus: Protein CYSTEINE-RICH TRANSMEMBRANE MODULE 9 (72 aa).

The span at 1–22 (MNPSEQNHLSVEKPSQTSSGPY) shows a compositional bias: polar residues. Positions 1 to 46 (MNPSEQNHLSVEKPSQTSSGPYTSPPPIGYPTRDAMVGDPPAAAVE) are disordered. The helical transmembrane segment at 49 to 65 (SKGDGFWKGCCAAICCC) threads the bilayer.

This sequence belongs to the CYSTM1 family. Heterodimers. Interacts with WIH1/CYSTM13. As to expression, mostly expressed in roots and flowers and, to a lower extent, in stems, siliques and leaves.

The protein resides in the cell membrane. It is found in the nucleus. Involved in resistance to abiotic stress. The sequence is that of Protein CYSTEINE-RICH TRANSMEMBRANE MODULE 9 from Arabidopsis thaliana (Mouse-ear cress).